Reading from the N-terminus, the 668-residue chain is Chitin synthase 8 (668 aa).

Positions methionine 1 to glutamine 26 are enriched in polar residues. Residues methionine 1–leucine 62 form a disordered region. Residues asparagine 21, asparagine 98, and asparagine 101 are each glycosylated (N-linked (GlcNAc...) asparagine). 2 helical membrane passes run tryptophan 136–tyrosine 156 and phenylalanine 162–isoleucine 182. Asparagine 216 and asparagine 476 each carry an N-linked (GlcNAc...) asparagine glycan. The next 4 membrane-spanning stretches (helical) occupy residues tryptophan 522–isoleucine 542, leucine 548–leucine 568, valine 583–phenylalanine 603, and tyrosine 615–valine 635.

Belongs to the chitin synthase family. Class VIII subfamily.

It localises to the cell membrane. Its subcellular location is the cell septum. It carries out the reaction [(1-&gt;4)-N-acetyl-beta-D-glucosaminyl](n) + UDP-N-acetyl-alpha-D-glucosamine = [(1-&gt;4)-N-acetyl-beta-D-glucosaminyl](n+1) + UDP + H(+). In terms of biological role, polymerizes chitin, a structural polymer of the cell wall and septum, by transferring the sugar moiety of UDP-GlcNAc to the non-reducing end of the growing chitin polymer. Participated in the development of cell wall and plays a critical role in fungal response to environmental stresses. Necessary for pathogenicity and deoxinivalenol (DON) production. In Gibberella zeae (strain ATCC MYA-4620 / CBS 123657 / FGSC 9075 / NRRL 31084 / PH-1) (Wheat head blight fungus), this protein is Chitin synthase 8.